Reading from the N-terminus, the 106-residue chain is ATP-dependent Clp protease adapter protein ClpS (106 aa).

The protein belongs to the ClpS family. In terms of assembly, binds to the N-terminal domain of the chaperone ClpA.

Its function is as follows. Involved in the modulation of the specificity of the ClpAP-mediated ATP-dependent protein degradation. In Vibrio campbellii (strain ATCC BAA-1116), this protein is ATP-dependent Clp protease adapter protein ClpS.